A 380-amino-acid chain; its full sequence is Cytochrome b (380 aa).

Helical transmembrane passes span 33–53 (FGSLLGVCLMIQIMTGLFLAM), 77–98 (WLIRYLHANGASMFFICLFIHV), 113–133 (WNIGIILFLTTMATAFVGYVL), and 178–198 (FFAFHFILPFIITALVLVHLL). Heme b-binding residues include His-83 and His-97. Heme b contacts are provided by His-182 and His-196. His-201 contributes to the a ubiquinone binding site. 4 helical membrane-spanning segments follow: residues 226–246 (IKDLLGVLLLLMVLMILVLFF), 288–308 (LGGVLALILSILILAAFPFLN), 320–340 (ITQFLYWIFIANLLILTWIGG), and 347–367 (FTTIGQISSILYFTIIVVLMP).

The protein belongs to the cytochrome b family. In terms of assembly, the cytochrome bc1 complex contains 11 subunits: 3 respiratory subunits (MT-CYB, CYC1 and UQCRFS1), 2 core proteins (UQCRC1 and UQCRC2) and 6 low-molecular weight proteins (UQCRH/QCR6, UQCRB/QCR7, UQCRQ/QCR8, UQCR10/QCR9, UQCR11/QCR10 and a cleavage product of UQCRFS1). This cytochrome bc1 complex then forms a dimer. The cofactor is heme b.

The protein localises to the mitochondrion inner membrane. Its function is as follows. Component of the ubiquinol-cytochrome c reductase complex (complex III or cytochrome b-c1 complex) that is part of the mitochondrial respiratory chain. The b-c1 complex mediates electron transfer from ubiquinol to cytochrome c. Contributes to the generation of a proton gradient across the mitochondrial membrane that is then used for ATP synthesis. This Thomasomys ischyrus (Strong-tailed oldfield mouse) protein is Cytochrome b (MT-CYB).